The sequence spans 253 residues: Dehydration-responsive element-binding protein 1D (253 aa).

Residues 1–22 (MEKNTAASGQLMTSSAEATPSS) are compositionally biased toward polar residues. A disordered region spans residues 1 to 31 (MEKNTAASGQLMTSSAEATPSSPKRPAGRTK). A DNA-binding region (AP2/ERF) is located at residues 39–98 (VFRGVRWRGCAGRWVCKVRVPGSRGDRFWIGTSDTAEETARTHDAAMLALCGASASLNFA). Positions 131 to 153 (RRVPAPGRGSTATATATSGDAAS) are disordered. Positions 134–153 (PAPGRGSTATATATSGDAAS) are enriched in low complexity.

This sequence belongs to the AP2/ERF transcription factor family. ERF subfamily.

It is found in the nucleus. In terms of biological role, transcriptional activator that binds specifically to the DNA sequence 5'-[AG]CCGAC-3'. Binding to the C-repeat/DRE element mediates high salinity- and dehydration-inducible transcription. The chain is Dehydration-responsive element-binding protein 1D (DREB1D) from Oryza sativa subsp. indica (Rice).